The sequence spans 364 residues: UDP-N-acetylglucosamine--N-acetylmuramyl-(pentapeptide) pyrophosphoryl-undecaprenol N-acetylglucosamine transferase (364 aa).

UDP-N-acetyl-alpha-D-glucosamine is bound by residues 12–14 (TGG), Asn-124, Arg-167, Ser-195, Ile-249, 268–273 (ALTVSE), and Gln-294.

The protein belongs to the glycosyltransferase 28 family. MurG subfamily.

Its subcellular location is the cell inner membrane. The enzyme catalyses di-trans,octa-cis-undecaprenyl diphospho-N-acetyl-alpha-D-muramoyl-L-alanyl-D-glutamyl-meso-2,6-diaminopimeloyl-D-alanyl-D-alanine + UDP-N-acetyl-alpha-D-glucosamine = di-trans,octa-cis-undecaprenyl diphospho-[N-acetyl-alpha-D-glucosaminyl-(1-&gt;4)]-N-acetyl-alpha-D-muramoyl-L-alanyl-D-glutamyl-meso-2,6-diaminopimeloyl-D-alanyl-D-alanine + UDP + H(+). Its pathway is cell wall biogenesis; peptidoglycan biosynthesis. In terms of biological role, cell wall formation. Catalyzes the transfer of a GlcNAc subunit on undecaprenyl-pyrophosphoryl-MurNAc-pentapeptide (lipid intermediate I) to form undecaprenyl-pyrophosphoryl-MurNAc-(pentapeptide)GlcNAc (lipid intermediate II). The polypeptide is UDP-N-acetylglucosamine--N-acetylmuramyl-(pentapeptide) pyrophosphoryl-undecaprenol N-acetylglucosamine transferase (Alteromonas mediterranea (strain DSM 17117 / CIP 110805 / LMG 28347 / Deep ecotype)).